The following is a 173-amino-acid chain: Photosystem I assembly protein Ycf3 (173 aa).

TPR repeat units follow at residues Ala-35–Pro-68, Ser-72–Leu-105, and Gly-120–Asn-153.

Belongs to the Ycf3 family.

Its subcellular location is the plastid. It is found in the chloroplast thylakoid membrane. Functionally, essential for the assembly of the photosystem I (PSI) complex. May act as a chaperone-like factor to guide the assembly of the PSI subunits. The polypeptide is Photosystem I assembly protein Ycf3 (Pyropia yezoensis (Susabi-nori)).